Reading from the N-terminus, the 251-residue chain is uncharacterized protein (251 aa).

Asparagine 149, asparagine 152, and asparagine 207 each carry an N-linked (GlcNAc...) asparagine; by host glycan. The chain crosses the membrane as a helical span at residues 226–246 (YLIFIIIIIIFIILILLWIKY).

The protein belongs to the glycosyltransferase 32 family.

The protein localises to the membrane. This is an uncharacterized protein from Acanthamoeba polyphaga (Amoeba).